A 285-amino-acid polypeptide reads, in one-letter code: Phosphatidylglycerol--prolipoprotein diacylglyceryl transferase (285 aa).

4 consecutive transmembrane segments (helical) span residues 30–50, 67–87, 103–123, and 129–149; these read LEIR…HWHI, LMLW…ILLY, WHGG…VSIV, and VRVM…LFLG. An a 1,2-diacyl-sn-glycero-3-phospho-(1'-sn-glycerol)-binding site is contributed by arginine 150. 3 helical membrane passes run 184–204, 213–233, and 252–272; these read SQVY…SILA, FGVL…AVEF, and GQVL…LTVL.

This sequence belongs to the Lgt family.

The protein localises to the cell inner membrane. The enzyme catalyses L-cysteinyl-[prolipoprotein] + a 1,2-diacyl-sn-glycero-3-phospho-(1'-sn-glycerol) = an S-1,2-diacyl-sn-glyceryl-L-cysteinyl-[prolipoprotein] + sn-glycerol 1-phosphate + H(+). Its pathway is protein modification; lipoprotein biosynthesis (diacylglyceryl transfer). Functionally, catalyzes the transfer of the diacylglyceryl group from phosphatidylglycerol to the sulfhydryl group of the N-terminal cysteine of a prolipoprotein, the first step in the formation of mature lipoproteins. This chain is Phosphatidylglycerol--prolipoprotein diacylglyceryl transferase, found in Anaplasma marginale (strain Florida).